Here is a 155-residue protein sequence, read N- to C-terminus: Snaclec agkicetin-C subunit alpha (155 aa).

The first 23 residues, 1 to 23, serve as a signal peptide directing secretion; that stretch reads MGRFIFVSFGLLVVFLSLSGTAA. 3 disulfide bridges follow: cysteine 25–cysteine 36, cysteine 53–cysteine 149, and cysteine 124–cysteine 141. The 119-residue stretch at 32–150 folds into the C-type lectin domain; sequence YIRFCYQPFK…CGLKHVFMCK (119 aa).

The protein belongs to the snaclec family. In terms of assembly, heterodimer of subunits alpha and beta; disulfide-linked. As to expression, expressed by the venom gland.

The protein localises to the secreted. Its function is as follows. Is a potent glycoprotein Ibalpha (GP1BA) antagonist. Concentration-dependently inhibits botrocetin-, ristocetin- and low dose thrombin-induced platelet aggregation. Inhibits platelet adhesion only through inhibiting the vWF interaction with GP1BA, but has minimal effect on other platelet receptors, such as alpha-IIb/beta-3 (ITGA2B/ITGB3) or alpha-2/beta-1 (ITGA2/ITGB1). Causes an instant severe thrombocytopenia in rats and is not lethal to mice. This Deinagkistrodon acutus (Hundred-pace snake) protein is Snaclec agkicetin-C subunit alpha.